A 273-amino-acid polypeptide reads, in one-letter code: tRNA pseudouridine synthase B (273 aa).

The active-site Nucleophile is the Asp38.

It belongs to the pseudouridine synthase TruB family. Type 1 subfamily.

It catalyses the reaction uridine(55) in tRNA = pseudouridine(55) in tRNA. Functionally, responsible for synthesis of pseudouridine from uracil-55 in the psi GC loop of transfer RNAs. This chain is tRNA pseudouridine synthase B, found in Campylobacter concisus (strain 13826).